A 287-amino-acid polypeptide reads, in one-letter code: Glycine--tRNA ligase alpha subunit (287 aa).

The protein belongs to the class-II aminoacyl-tRNA synthetase family. Tetramer of two alpha and two beta subunits.

Its subcellular location is the cytoplasm. The catalysed reaction is tRNA(Gly) + glycine + ATP = glycyl-tRNA(Gly) + AMP + diphosphate. The sequence is that of Glycine--tRNA ligase alpha subunit from Campylobacter curvus (strain 525.92).